Reading from the N-terminus, the 3072-residue chain is Eukaryotic translation initiation factor 2-alpha kinase PK4 (3072 aa).

At 1-106 (MCNFIKKGIR…EFRWLINKLE (106 aa)) the chain is on the cytoplasmic side. Residues 107-127 (IIYFYFFCHLLLLCIFQNIFL) form a helical membrane-spanning segment. Residues 128–1643 (LTYMSKEYFL…FTSIRYKRRR (1516 aa)) are Lumenal-facing. Residues 383 to 402 (KEKCHRDEKCDRGENYDRGE) form a disordered region. The tract at residues 576–610 (KKKILDENDMITIDNNIDKKENILFPYFHMEILKD) is 10 X 7 AA tandem repeat of D-K-N-[GE]-L-D-[GD]. Positions 970-1010 (QYEDNNDNDNNKNDNNKNDNNKNDNNKNDNNNNNNNNNNNS) are disordered. Residues 978–996 (DNNKNDNNKNDNNKNDNNK) show a composition bias toward basic and acidic residues. Residues 997 to 1009 (NDNNNNNNNNNNN) are compositionally biased toward low complexity. The chain crosses the membrane as a helical span at residues 1644-1664 (WYWRVFYTIMFIIFFPVLFIY). Residues 1665–3072 (RRIIKRRKGS…IKNENNGADK (1408 aa)) lie on the Cytoplasmic side of the membrane. Disordered stretches follow at residues 1737–1766 (KNYN…SKSN) and 1917–1937 (KVGS…KDKK). The span at 1738 to 1766 (NYNNNNNNNNNKNNNNISNNNSNSNSKSN) shows a compositional bias: low complexity. Residues 1928–1937 (NYTDNEKDKK) show a composition bias toward basic and acidic residues. ATP contacts are provided by residues 2152–2160 (IGQGGFGSV) and K2177. Disordered regions lie at residues 2316-2402 (FYSD…EGRD), 2479-2558 (RNED…KKLD), and 2691-2749 (ENDD…DDDI). Basic and acidic residues predominate over residues 2326-2335 (KNKENPEKNH). Over residues 2362–2384 (HKLKKRKNKKKKSKKKRKSKSKI) the composition is skewed to basic residues. 10 tandem repeats follow at residues 2483-2489 (DKNGLDG), 2490-2496 (DKNGLDG), 2497-2503 (DKNGLDG), 2504-2510 (DKNGLDG), 2511-2517 (DKNGLDG), 2518-2524 (DKNELDG), 2525-2531 (DKNGLDG), 2532-2538 (DKNGLDG), 2539-2545 (DKNGLDG), and 2546-2552 (DKNELDD). The Protein kinase domain occupies 2627–2998 (TNVESINTNG…KIKVLLDPHL (372 aa)). Acidic residues predominate over residues 2692–2702 (NDDDDDDDDDN). Catalysis depends on D2835, which acts as the Proton acceptor. A Phosphothreonine modification is found at T2902.

The protein belongs to the protein kinase superfamily. Ser/Thr protein kinase family. GCN2 subfamily. As to quaternary structure, may form oligomers in response to stress; oligomerization may result in catalytic activity. Interacts with BIP; the interaction is disrupted in response to stress. In terms of processing, auto-phosphorylated.

Its subcellular location is the endoplasmic reticulum membrane. The catalysed reaction is L-seryl-[protein] + ATP = O-phospho-L-seryl-[protein] + ADP + H(+). It catalyses the reaction L-threonyl-[protein] + ATP = O-phospho-L-threonyl-[protein] + ADP + H(+). Dissociation from BIP and oligomerization, may results autophosphorylation and kinase activity induction. Its function is as follows. During the asexual blood stage, phosphorylates translation factor eIF2alpha in late schizonts resulting in protein translation inhibition. Plays a role in trophozoite differentiation into schizonts. The chain is Eukaryotic translation initiation factor 2-alpha kinase PK4 from Plasmodium falciparum (isolate 3D7).